The primary structure comprises 289 residues: Acetyl-coenzyme A carboxylase carboxyl transferase subunit beta (289 aa).

The CoA carboxyltransferase N-terminal domain occupies 28-289 (VMTKCPKCKK…QGGEMAVWQS (262 aa)). Zn(2+) is bound by residues C32, C35, C51, and C54. The segment at 32–54 (CPKCKKIMYTKELLKNLKVCVNC) adopts a C4-type zinc-finger fold.

It belongs to the AccD/PCCB family. In terms of assembly, acetyl-CoA carboxylase is a heterohexamer composed of biotin carboxyl carrier protein (AccB), biotin carboxylase (AccC) and two subunits each of ACCase subunit alpha (AccA) and ACCase subunit beta (AccD). Requires Zn(2+) as cofactor.

Its subcellular location is the cytoplasm. The catalysed reaction is N(6)-carboxybiotinyl-L-lysyl-[protein] + acetyl-CoA = N(6)-biotinyl-L-lysyl-[protein] + malonyl-CoA. Its pathway is lipid metabolism; malonyl-CoA biosynthesis; malonyl-CoA from acetyl-CoA: step 1/1. Its function is as follows. Component of the acetyl coenzyme A carboxylase (ACC) complex. Biotin carboxylase (BC) catalyzes the carboxylation of biotin on its carrier protein (BCCP) and then the CO(2) group is transferred by the transcarboxylase to acetyl-CoA to form malonyl-CoA. In Bacillus cereus (strain AH187), this protein is Acetyl-coenzyme A carboxylase carboxyl transferase subunit beta.